The primary structure comprises 114 residues: Large ribosomal subunit protein uL22 (114 aa).

It belongs to the universal ribosomal protein uL22 family. As to quaternary structure, part of the 50S ribosomal subunit.

In terms of biological role, this protein binds specifically to 23S rRNA; its binding is stimulated by other ribosomal proteins, e.g. L4, L17, and L20. It is important during the early stages of 50S assembly. It makes multiple contacts with different domains of the 23S rRNA in the assembled 50S subunit and ribosome. Functionally, the globular domain of the protein is located near the polypeptide exit tunnel on the outside of the subunit, while an extended beta-hairpin is found that lines the wall of the exit tunnel in the center of the 70S ribosome. In Streptococcus sanguinis (strain SK36), this protein is Large ribosomal subunit protein uL22.